The primary structure comprises 266 residues: Electron transfer flavoprotein subunit beta (266 aa).

It belongs to the ETF beta-subunit/FixA family. Heterodimer of an alpha and a beta subunit. FAD is required as a cofactor. AMP serves as cofactor.

The electron transfer flavoprotein serves as a specific electron acceptor for other dehydrogenases. It transfers the electrons to the main respiratory chain via ETF-ubiquinone oxidoreductase (ETF dehydrogenase). The sequence is that of Electron transfer flavoprotein subunit beta (etfB) from Mycobacterium bovis (strain ATCC BAA-935 / AF2122/97).